The primary structure comprises 47 residues: Packaging protein P22 (47 aa).

The chain crosses the membrane as a helical span at residues 22–42 (TGWLAFVGLIIVAIILWQQII).

Heterodimer of P20 and P22; further multimerizes as hexamers of heterodimers. Part of the dodecameric portal complex that is composed of the packaging efficiency factor P6, the DNA packaging ATPase P9, and the internal heterododecamer P20/P22 which spans the virion inner membrane.

The protein localises to the virion membrane. Its function is as follows. Together with P22, forms the internal part of the portal complex embeded in the virion internal membrane and which plays critical roles in genome packaging and genome ejection. Both proteins multimerize as a single ring-shaped heterdodecamer arranged around a central channel and interact with the P6/P9 external part of the portal. The protein is Packaging protein P22 (XXII) of Enterobacteria phage PRD1 (Bacteriophage PRD1).